The following is a 258-amino-acid chain: Ribosomal RNA small subunit methyltransferase J (258 aa).

S-adenosyl-L-methionine-binding positions include 123–124 (ER) and D177. Residues 232–258 (IDGPKPSHSLEGKSSRYDIYPKKALKA) are disordered. The segment covering 239–252 (HSLEGKSSRYDIYP) has biased composition (basic and acidic residues).

Belongs to the methyltransferase superfamily. RsmJ family.

It is found in the cytoplasm. The catalysed reaction is guanosine(1516) in 16S rRNA + S-adenosyl-L-methionine = N(2)-methylguanosine(1516) in 16S rRNA + S-adenosyl-L-homocysteine + H(+). In terms of biological role, specifically methylates the guanosine in position 1516 of 16S rRNA. The polypeptide is Ribosomal RNA small subunit methyltransferase J (Pseudomonas putida (strain ATCC 47054 / DSM 6125 / CFBP 8728 / NCIMB 11950 / KT2440)).